The sequence spans 500 residues: Protein adenylyltransferase Fic (500 aa).

The chain crosses the membrane as a helical span at residues Leu39–Leu59. TPR repeat units follow at residues Ala122–His155 and Pro156–His190. The Inhibitory (S/T)XXXE(G/N) motif signature appears at Ser247 to Gly252. ATP contacts are provided by residues Glu251 and Val333 to His336. The Fido domain occupies Ile302–Asp437. Residue His380 is part of the active site. Residues Asp384 to Arg391, Tyr416 to Tyr417, and Asn424 contribute to the ATP site. A disordered region spans residues Gly477–Trp500.

Belongs to the fic family. Homodimer.

The protein localises to the membrane. It catalyses the reaction L-tyrosyl-[protein] + ATP = O-(5'-adenylyl)-L-tyrosyl-[protein] + diphosphate. The catalysed reaction is L-threonyl-[protein] + ATP = 3-O-(5'-adenylyl)-L-threonyl-[protein] + diphosphate. The enzyme catalyses 3-O-(5'-adenylyl)-L-threonyl-[protein] + H2O = L-threonyl-[protein] + AMP + H(+). With respect to regulation, the side chain of Glu-251 determines which of the two opposing activities (AMPylase or de-AMPylase) will take place. In response to endoplasmic reticulum stress, mediates de-AMPylase activity. Adenylyltransferase activity is inhibited by the inhibitory helix present at the N-terminus: Glu-251 binds ATP and competes with ATP-binding at Arg-391, thereby preventing adenylyltransferase activity. In unstressed cells, disengagement of Glu-251 promotes adenylyltransferase activity. Activation dissociates ATP-binding from Glu-251, allowing ordered binding of the entire ATP moiety with the alpha-phosphate in an orientation that is productive for accepting an incoming target hydroxyl side chain. In terms of biological role, protein that can both mediate the addition of adenosine 5'-monophosphate (AMP) to specific residues of target proteins (AMPylation), and the removal of the same modification from target proteins (de-AMPylation), depending on the context. The side chain of Glu-251 determines which of the two opposing activities (AMPylase or de-AMPylase) will take place. Acts as a key regulator of the unfolded protein response (UPR) by mediating AMPylation or de-AMPylation of Hsc70-3/BiP. In unstressed cells, acts as an adenylyltransferase by mediating AMPylation of Hsc70-3/BiP at 'Thr-518', thereby inactivating it. In response to endoplasmic reticulum stress, acts as a phosphodiesterase by mediating removal of ATP (de-AMPylation) from Hsc70-3/BiP at 'Thr-518', leading to restore HSPA5/BiP activity. In Culex quinquefasciatus (Southern house mosquito), this protein is Protein adenylyltransferase Fic.